The chain runs to 191 residues: Elongation factor P (191 aa).

This sequence belongs to the elongation factor P family.

Its subcellular location is the cytoplasm. The protein operates within protein biosynthesis; polypeptide chain elongation. Functionally, involved in peptide bond synthesis. Stimulates efficient translation and peptide-bond synthesis on native or reconstituted 70S ribosomes in vitro. Probably functions indirectly by altering the affinity of the ribosome for aminoacyl-tRNA, thus increasing their reactivity as acceptors for peptidyl transferase. This Bartonella henselae (strain ATCC 49882 / DSM 28221 / CCUG 30454 / Houston 1) (Rochalimaea henselae) protein is Elongation factor P.